The primary structure comprises 658 residues: Protein CFAP20DC (658 aa).

Disordered regions lie at residues 312–522 (QQGE…EEEY) and 589–634 (PVNQ…LDSS). Over residues 319–328 (SHPVKQTTPL) the composition is skewed to polar residues. Residues 339-349 (PPRDPSADKGS) show a composition bias toward basic and acidic residues. Composition is skewed to low complexity over residues 351–363 (RRGL…SGSR) and 417–434 (SSGP…LLLD). Positions 494-506 (DPKEDSRVTKGDT) are enriched in basic and acidic residues. Over residues 507–521 (ELEDDFYGSDSSEEE) the composition is skewed to acidic residues. Over residues 625-634 (QPLEQSLDSS) the composition is skewed to polar residues.

The polypeptide is Protein CFAP20DC (Rattus norvegicus (Rat)).